A 309-amino-acid polypeptide reads, in one-letter code: uncharacterized protein (309 aa).

The chain crosses the membrane as a helical span at residues 23 to 39; it reads RFNVAIIGGTGGLGRAI.

Belongs to the NmrA-type oxidoreductase family.

The protein resides in the membrane. This is an uncharacterized protein from Saccharomyces cerevisiae (strain ATCC 204508 / S288c) (Baker's yeast).